Consider the following 393-residue polypeptide: Phosphopentomutase (393 aa).

Residues Asp15, Asp288, His293, Asp329, His330, and His341 each contribute to the Mn(2+) site.

The protein belongs to the phosphopentomutase family. Requires Mn(2+) as cofactor.

It localises to the cytoplasm. It catalyses the reaction 2-deoxy-alpha-D-ribose 1-phosphate = 2-deoxy-D-ribose 5-phosphate. It carries out the reaction alpha-D-ribose 1-phosphate = D-ribose 5-phosphate. It functions in the pathway carbohydrate degradation; 2-deoxy-D-ribose 1-phosphate degradation; D-glyceraldehyde 3-phosphate and acetaldehyde from 2-deoxy-alpha-D-ribose 1-phosphate: step 1/2. In terms of biological role, isomerase that catalyzes the conversion of deoxy-ribose 1-phosphate (dRib-1-P) and ribose 1-phosphate (Rib-1-P) to deoxy-ribose 5-phosphate (dRib-5-P) and ribose 5-phosphate (Rib-5-P), respectively. This is Phosphopentomutase from Halalkalibacterium halodurans (strain ATCC BAA-125 / DSM 18197 / FERM 7344 / JCM 9153 / C-125) (Bacillus halodurans).